The chain runs to 115 residues: NAD(P)H-quinone oxidoreductase subunit M (115 aa).

It belongs to the complex I NdhM subunit family. In terms of assembly, NDH-1 can be composed of about 15 different subunits; different subcomplexes with different compositions have been identified which probably have different functions.

The protein localises to the cellular thylakoid membrane. The catalysed reaction is a plastoquinone + NADH + (n+1) H(+)(in) = a plastoquinol + NAD(+) + n H(+)(out). It catalyses the reaction a plastoquinone + NADPH + (n+1) H(+)(in) = a plastoquinol + NADP(+) + n H(+)(out). In terms of biological role, NDH-1 shuttles electrons from an unknown electron donor, via FMN and iron-sulfur (Fe-S) centers, to quinones in the respiratory and/or the photosynthetic chain. The immediate electron acceptor for the enzyme in this species is believed to be plastoquinone. Couples the redox reaction to proton translocation, and thus conserves the redox energy in a proton gradient. Cyanobacterial NDH-1 also plays a role in inorganic carbon-concentration. The chain is NAD(P)H-quinone oxidoreductase subunit M from Parasynechococcus marenigrum (strain WH8102).